The chain runs to 418 residues: Gamma-glutamyl phosphate reductase (418 aa).

The protein belongs to the gamma-glutamyl phosphate reductase family.

The protein localises to the cytoplasm. The catalysed reaction is L-glutamate 5-semialdehyde + phosphate + NADP(+) = L-glutamyl 5-phosphate + NADPH + H(+). Its pathway is amino-acid biosynthesis; L-proline biosynthesis; L-glutamate 5-semialdehyde from L-glutamate: step 2/2. In terms of biological role, catalyzes the NADPH-dependent reduction of L-glutamate 5-phosphate into L-glutamate 5-semialdehyde and phosphate. The product spontaneously undergoes cyclization to form 1-pyrroline-5-carboxylate. This is Gamma-glutamyl phosphate reductase from Geobacter sp. (strain M21).